Consider the following 561-residue polypeptide: uncharacterized protein (561 aa).

6 helical membrane passes run 10-29, 34-56, 63-80, 95-117, 122-144, and 164-186; these read LLRN…GYWI, FGSL…SQIG, LKTV…FQSG, VLMA…RMFH, LAAG…SSAL, and GYAV…ILPW. 2 consecutive RCK C-terminal domains span residues 205–287 and 294–376; these read QGMA…LLGE and HDMD…ELGS. Helical transmembrane passes span 386 to 403, 407 to 429, 442 to 464, 479 to 501, and 538 to 560; these read LVFH…GLIV, GSIP…FGWY, AAST…LQTG, FMLG…RYVL, and SFAI…VVAF.

Belongs to the AAE transporter (TC 2.A.81) family.

The protein resides in the cell membrane. This is an uncharacterized protein from Zymomonas mobilis subsp. mobilis (strain ATCC 31821 / ZM4 / CP4).